The chain runs to 83 residues: uncharacterized protein (83 aa).

Positions 15–36 are disordered; it reads RLKNGRGNKTMSESDYNTSDSG. Positions 21-35 are enriched in polar residues; the sequence is GNKTMSESDYNTSDS.

This is an uncharacterized protein from Aedes vexans (Inland floodwater mosquito).